Here is a 368-residue protein sequence, read N- to C-terminus: Aminomethyltransferase (368 aa).

The protein belongs to the GcvT family. The glycine cleavage system is composed of four proteins: P, T, L and H.

The catalysed reaction is N(6)-[(R)-S(8)-aminomethyldihydrolipoyl]-L-lysyl-[protein] + (6S)-5,6,7,8-tetrahydrofolate = N(6)-[(R)-dihydrolipoyl]-L-lysyl-[protein] + (6R)-5,10-methylene-5,6,7,8-tetrahydrofolate + NH4(+). The glycine cleavage system catalyzes the degradation of glycine. This chain is Aminomethyltransferase, found in Alkaliphilus oremlandii (strain OhILAs) (Clostridium oremlandii (strain OhILAs)).